Reading from the N-terminus, the 260-residue chain is Type III pantothenate kinase (260 aa).

6–13 (DVGNTNIT) is an ATP binding site. Position 107 to 110 (107 to 110 (GADR)) interacts with substrate. The Proton acceptor role is filled by D109. D129 is a binding site for K(+). An ATP-binding site is contributed by T132. Residue T184 coordinates substrate.

This sequence belongs to the type III pantothenate kinase family. In terms of assembly, homodimer. It depends on NH4(+) as a cofactor. K(+) is required as a cofactor.

The protein localises to the cytoplasm. The enzyme catalyses (R)-pantothenate + ATP = (R)-4'-phosphopantothenate + ADP + H(+). It participates in cofactor biosynthesis; coenzyme A biosynthesis; CoA from (R)-pantothenate: step 1/5. Catalyzes the phosphorylation of pantothenate (Pan), the first step in CoA biosynthesis. In Agathobacter rectalis (strain ATCC 33656 / DSM 3377 / JCM 17463 / KCTC 5835 / VPI 0990) (Eubacterium rectale), this protein is Type III pantothenate kinase.